The chain runs to 351 residues: UDP-3-O-acylglucosamine N-acyltransferase 1 (351 aa).

The active-site Proton acceptor is H237.

The protein belongs to the transferase hexapeptide repeat family. LpxD subfamily. Homotrimer.

It catalyses the reaction a UDP-3-O-[(3R)-3-hydroxyacyl]-alpha-D-glucosamine + a (3R)-hydroxyacyl-[ACP] = a UDP-2-N,3-O-bis[(3R)-3-hydroxyacyl]-alpha-D-glucosamine + holo-[ACP] + H(+). The protein operates within bacterial outer membrane biogenesis; LPS lipid A biosynthesis. In terms of biological role, catalyzes the N-acylation of UDP-3-O-acylglucosamine using 3-hydroxyacyl-ACP as the acyl donor. Is involved in the biosynthesis of lipid A, a phosphorylated glycolipid that anchors the lipopolysaccharide to the outer membrane of the cell. The polypeptide is UDP-3-O-acylglucosamine N-acyltransferase 1 (Legionella pneumophila (strain Paris)).